Here is a 104-residue protein sequence, read N- to C-terminus: Succinate dehydrogenase assembly factor 4, mitochondrial (104 aa).

Residues 1-30 (MVSTTLSVSRMTFVWRAARPSLLNHSLRKM) constitute a mitochondrion transit peptide. The interval 29-104 (KMSYQEGKPE…WERKGRCIDF (76 aa)) is disordered. 2 stretches are compositionally biased toward basic and acidic residues: residues 63–83 (EREP…EKGG) and 91–104 (RYGD…CIDF).

This sequence belongs to the SDHAF4 family. Interacts with Sdha in its FAD-bound form.

The protein resides in the mitochondrion matrix. In terms of biological role, plays an essential role in the assembly of succinate dehydrogenase (SDH), an enzyme complex (also referred to as respiratory complex II) that is a component of both the tricarboxylic acid (TCA) cycle and the mitochondrial electron transport chain, and which couples the oxidation of succinate to fumarate with the reduction of ubiquinone (coenzyme Q) to ubiquinol. Binds to the flavoprotein subunit Sdha in its FAD-bound form, blocking the generation of excess reactive oxygen species (ROS) and facilitating its assembly with the iron-sulfur protein subunit Sdhb into the SDH catalytic dimer. This Mus musculus (Mouse) protein is Succinate dehydrogenase assembly factor 4, mitochondrial.